A 165-amino-acid polypeptide reads, in one-letter code: Methyl-coenzyme M reductase II operon protein D (165 aa).

MCR is composed of three subunits: alpha, beta, and gamma. The function of protein D is not known.

The chain is Methyl-coenzyme M reductase II operon protein D (mrtD) from Methanothermus fervidus (strain ATCC 43054 / DSM 2088 / JCM 10308 / V24 S).